Here is a 416-residue protein sequence, read N- to C-terminus: Homogentisate 1,2-dioxygenase (416 aa).

Residue histidine 275 is the Proton acceptor of the active site. 2 residues coordinate Fe cation: histidine 318 and glutamate 324. Residues tyrosine 333 and histidine 354 each coordinate homogentisate. Histidine 354 lines the Fe cation pocket.

The protein belongs to the homogentisate dioxygenase family. As to quaternary structure, hexamer; dimer of trimers. Fe cation serves as cofactor.

The catalysed reaction is homogentisate + O2 = 4-maleylacetoacetate + H(+). Its pathway is amino-acid degradation; L-phenylalanine degradation; acetoacetate and fumarate from L-phenylalanine: step 4/6. Involved in the catabolism of homogentisate (2,5-dihydroxyphenylacetate or 2,5-OH-PhAc), a central intermediate in the degradation of phenylalanine and tyrosine. Catalyzes the oxidative ring cleavage of the aromatic ring of homogentisate to yield maleylacetoacetate. The polypeptide is Homogentisate 1,2-dioxygenase (Legionella pneumophila subsp. pneumophila (strain Philadelphia 1 / ATCC 33152 / DSM 7513)).